We begin with the raw amino-acid sequence, 61 residues long: Potassium channel toxin alpha-KTx 5.3 (61 aa).

A signal peptide spans 1–28; that stretch reads MHNYYKIVLIMVAFFAVIITFSNIQVEG. 3 cysteine pairs are disulfide-bonded: Cys-31-Cys-49, Cys-36-Cys-54, and Cys-40-Cys-56. The interval 34-37 is [R/K]XCQ motif; it reads KRCQ. The residue at position 59 (His-59) is a Histidine amide.

The protein belongs to the short scorpion toxin superfamily. Potassium channel inhibitor family. Alpha-KTx 05 subfamily. In terms of tissue distribution, expressed by the venom gland.

The protein localises to the secreted. Its function is as follows. Blocks small conductance calcium-activated potassium channels (KCNN, SK). Has also been shown to weakly inhibit Kv11.1/KCNH2/ERG1, Kv1.2/KCNA2, Kv1.3/KCNA3 and Kv2.1/KCNB1 voltage-gated potassium channels. In Olivierus martensii (Manchurian scorpion), this protein is Potassium channel toxin alpha-KTx 5.3.